The following is a 462-amino-acid chain: tRNA modification GTPase MnmE (462 aa).

Residues Arg-34, Glu-92, and Lys-131 each coordinate (6S)-5-formyl-5,6,7,8-tetrahydrofolate. A TrmE-type G domain is found at 227–386 (GLQVVIAGKP…LIDAITAHAG (160 aa)). Residue Asn-237 participates in K(+) binding. Residues 237-242 (NAGKSS), 256-262 (TDIAGTT), and 281-284 (DTAG) contribute to the GTP site. Ser-241 contacts Mg(2+). Residues Thr-256, Ile-258, and Thr-261 each coordinate K(+). Thr-262 contacts Mg(2+). Residue Lys-462 participates in (6S)-5-formyl-5,6,7,8-tetrahydrofolate binding.

The protein belongs to the TRAFAC class TrmE-Era-EngA-EngB-Septin-like GTPase superfamily. TrmE GTPase family. As to quaternary structure, homodimer. Heterotetramer of two MnmE and two MnmG subunits. The cofactor is K(+).

Its subcellular location is the cytoplasm. In terms of biological role, exhibits a very high intrinsic GTPase hydrolysis rate. Involved in the addition of a carboxymethylaminomethyl (cmnm) group at the wobble position (U34) of certain tRNAs, forming tRNA-cmnm(5)s(2)U34. The chain is tRNA modification GTPase MnmE from Acinetobacter baylyi (strain ATCC 33305 / BD413 / ADP1).